A 212-amino-acid chain; its full sequence is uncharacterized protein (212 aa).

A helical membrane pass occupies residues 5 to 25; it reads IFIILIAVLLIGVNIKKIAAA.

Its subcellular location is the membrane. This is an uncharacterized protein from Borreliella burgdorferi (strain ATCC 35210 / DSM 4680 / CIP 102532 / B31) (Borrelia burgdorferi).